Reading from the N-terminus, the 434-residue chain is Salicylate hydroxylase (434 aa).

Residue 9–38 (RIGIVGGGISGVALALELCRYSHIQVQLFE) participates in FAD binding.

Monomer. Requires FAD as cofactor.

It catalyses the reaction salicylate + NADH + O2 + 2 H(+) = catechol + CO2 + NAD(+) + H2O. It functions in the pathway aromatic compound metabolism; naphthalene degradation. The polypeptide is Salicylate hydroxylase (nahG) (Pseudomonas putida (Arthrobacter siderocapsulatus)).